The sequence spans 263 residues: Oxidoreductase UcpA (263 aa).

An NAD(+)-binding site is contributed by 10 to 32 (LITGALQGIGEGIARTFARHGAN). S141 serves as a coordination point for substrate. Y155 serves as the catalytic Proton acceptor.

Belongs to the short-chain dehydrogenases/reductases (SDR) family.

This is Oxidoreductase UcpA (ucpA) from Escherichia coli (strain K12).